A 245-amino-acid polypeptide reads, in one-letter code: Dehydrogenase/reductase SDR family member 6 (245 aa).

Residues 16 to 18, D37, and D58 each bind NAD(+); that span reads QGI. R144 is a binding site for substrate. Y147 (proton acceptor) is an active-site residue. NAD(+) contacts are provided by residues K151 and 180–184; that span reads VDTPS. Residues R188 and R205 each contribute to the substrate site.

The protein belongs to the short-chain dehydrogenases/reductases (SDR) family. Homotetramer. As to expression, detected in liver, spleen and macrophages. Widely expressed.

It is found in the cytoplasm. The enzyme catalyses cis-4-hydroxy-L-proline + NAD(+) = 4-oxo-L-proline + NADH + H(+). It carries out the reaction (R)-3-hydroxybutanoate + NAD(+) = acetoacetate + NADH + H(+). Its pathway is amino-acid metabolism. It functions in the pathway siderophore biosynthesis. Its function is as follows. NAD(H)-dependent dehydrogenase/reductase with a preference for cyclic substrates. Catalyzes stereoselective conversion of 4-oxo-L-proline to cis-4-hydroxy-L-proline, likely a detoxification mechanism for ketoprolines. Mediates the formation of 2,5-dihydroxybenzoate (2,5-DHBA), a siderophore that chelates free cytoplasmic iron and associates with LCN2, thereby regulating iron transport and homeostasis while protecting cells against free radical-induced oxidative stress. The iron-siderophore complex is imported into mitochondria, providing an iron source for mitochondrial metabolic processes in particular heme synthesis. May act as a 3-hydroxybutyrate dehydrogenase. (Microbial infection) May play a role in susceptibility to bacterial infection by providing an assimilable source of iron that is exploited by pathogenic bacteria. Host iron-siderophore complexes can be used by bacteria to promote their own growth and pathogenicity. This chain is Dehydrogenase/reductase SDR family member 6, found in Mus musculus (Mouse).